A 166-amino-acid chain; its full sequence is Putative peroxisomal peroxiredoxin (166 aa).

The Thioredoxin domain occupies Phe5–Leu166. The active-site Cysteine sulfenic acid (-SOH) intermediate is the Cys56.

Belongs to the peroxiredoxin family. Prx5 subfamily. As to quaternary structure, homodimer; disulfide-linked, upon oxidation.

It catalyses the reaction a hydroperoxide + [protein]-dithiol = [protein]-disulfide + an alcohol + H2O. Thiol-specific peroxidase that catalyzes the reduction of hydrogen peroxide and organic hydroperoxides to water and alcohols, respectively. Plays a role in cell protection against oxidative stress by detoxifying peroxides and as sensor of hydrogen peroxide-mediated signaling events. This is Putative peroxisomal peroxiredoxin from Lipomyces kononenkoae (Yeast).